Here is a 129-residue protein sequence, read N- to C-terminus: Putative F-box protein At3g42722 (129 aa).

An F-box domain is found at 4 to 50; that stretch reads MASIDCLPDELLVGILSFILTNEAASTSILSKRWRTLFAFSHNLDCN.

The chain is Putative F-box protein At3g42722 from Arabidopsis thaliana (Mouse-ear cress).